The primary structure comprises 428 residues: Enolase 1 (428 aa).

Glutamine 167 contributes to the (2R)-2-phosphoglycerate binding site. Residue glutamate 209 is the Proton donor of the active site. Aspartate 246, glutamate 288, and aspartate 315 together coordinate Mg(2+). Residues lysine 340, arginine 369, serine 370, and lysine 391 each contribute to the (2R)-2-phosphoglycerate site. Residue lysine 340 is the Proton acceptor of the active site.

The protein belongs to the enolase family. Component of the RNA degradosome, a multiprotein complex involved in RNA processing and mRNA degradation. It depends on Mg(2+) as a cofactor.

Its subcellular location is the cytoplasm. It localises to the secreted. It is found in the cell surface. The enzyme catalyses (2R)-2-phosphoglycerate = phosphoenolpyruvate + H2O. It participates in carbohydrate degradation; glycolysis; pyruvate from D-glyceraldehyde 3-phosphate: step 4/5. In terms of biological role, catalyzes the reversible conversion of 2-phosphoglycerate (2-PG) into phosphoenolpyruvate (PEP). It is essential for the degradation of carbohydrates via glycolysis. The protein is Enolase 1 of Pseudomonas syringae pv. tomato (strain ATCC BAA-871 / DC3000).